A 346-amino-acid chain; its full sequence is Putative agmatine deiminase (346 aa).

The active-site Amidino-cysteine intermediate is Cys-333.

It belongs to the agmatine deiminase family.

It catalyses the reaction agmatine + H2O = N-carbamoylputrescine + NH4(+). This chain is Putative agmatine deiminase, found in Legionella pneumophila (strain Paris).